The sequence spans 138 residues: MRTLWIVAVCLIGVEGNLFQFGDMILQKTGKEAVHSYAIYGCYCGWGGQGRAQDATDRCCFAQDCCYGRVNDCNPKTATYTYSFENGDIVCGDNDLCLRAVCECDRAAAICLGENVNTYDKNYEYYSISHCTEESEQC.

Positions 1-16 (MRTLWIVAVCLIGVEG) are cleaved as a signal peptide. Cystine bridges form between cysteine 42/cysteine 131, cysteine 44/cysteine 60, cysteine 59/cysteine 111, cysteine 65/cysteine 138, cysteine 66/cysteine 104, cysteine 73/cysteine 97, and cysteine 91/cysteine 102.

Heterodimer of an acidic and a basic chain; non-covalently linked. The basic chain is toxic and has phospholipase A2 activity (chain HDP-1P (AC Q1RP79) or HDP-2P (AC Q1RP78)) and the acidic chain is non-toxic and functions as its inhibitor (chain HPD-1I). As to expression, expressed by the venom gland.

The protein localises to the secreted. Functionally, heterodimer: slightly affects neuromuscular transmission acting presynaptically. It has a low catalytic activity, a low anticoagulant activity and weakly inhibits ADP-induced platelet aggregation. Monomer: has no activity (neurotoxic, catalytic, anticoagulant and a ADP-induced platelet aggregation), but inhibits phospholipase A2. The polypeptide is Acidic phospholipase A2 inhibitor chain HPD-1I (Vipera nikolskii (Nikolsky's adder)).